Reading from the N-terminus, the 409-residue chain is MTSNKQPEVNIGLVGHVDHGKTTLVQALSGEWTDQHSEEMKRGISIRLGYADATFRRCPEAEEPEAFTVDEHCDDHDVDTDHLRTVSFVDAPGHETLMATMLSGAAIMDGAVLVISATEPVPQAQTEEHLSALDIIGIDNIVIAQNKVDLVDEERAMQNYEQIQEFVEGTVAEGAPVVPISAGQEANIDLLIEAVQSEIPTPERDPDEDARMMVARSFDINRPGTTWDDLMGGVLGGSLVGGQLDADDEIELRPGREVEEGGKTEWQPVTTTVRSLQSGGDFVDTVTPGGLLGVGTGLDPAITKGDALAGQVAGPPGSLPPVHETFTMDVDLLERIVGDDGGEVDEISTGEPLMLTIGTATTVGSVTSARDDECEVALKRPVCAASGSKIAINRRVGARWRLIGVGTLR.

A tr-type G domain is found at Gln-6–Glu-203. Residues Gly-15 to Thr-22 are G1. Positions 18, 22, 43, and 45 each coordinate Mg(2+). A GTP-binding site is contributed by Asp-18–Thr-23. The segment at Gly-43–Arg-47 is G2. Residues Asp-90–Gly-93 form a G3 region. GTP contacts are provided by residues Asn-146–Asp-149 and Ser-181–Gly-183. Positions Asn-146–Asp-149 are G4. The segment at Ser-181–Gly-183 is G5.

It belongs to the TRAFAC class translation factor GTPase superfamily. Classic translation factor GTPase family. EIF2G subfamily. Heterotrimer composed of an alpha, a beta and a gamma chain. Requires Mg(2+) as cofactor.

The enzyme catalyses GTP + H2O = GDP + phosphate + H(+). Functionally, eIF-2 functions in the early steps of protein synthesis by forming a ternary complex with GTP and initiator tRNA. This chain is Translation initiation factor 2 subunit gamma, found in Haloarcula marismortui (strain ATCC 43049 / DSM 3752 / JCM 8966 / VKM B-1809) (Halobacterium marismortui).